The chain runs to 79 residues: MSKICQITGKKAMVGNNVSHSKRRTKRVFDVNLFRKKFYWVEQDCWVVLRISAAGLRLINKIGLDAAIKRAAEKGFLNA.

This sequence belongs to the bacterial ribosomal protein bL28 family.

The chain is Large ribosomal subunit protein bL28 from Porphyromonas gingivalis (strain ATCC 33277 / DSM 20709 / CIP 103683 / JCM 12257 / NCTC 11834 / 2561).